Consider the following 522-residue polypeptide: Gypsy retrotransposon integrase-like protein 1 (522 aa).

In terms of domain architecture, Integrase catalytic spans 135-292 (KVENPWSLVT…TPYFQMFSRN (158 aa)).

The chain is Gypsy retrotransposon integrase-like protein 1 (GIN1) from Macaca fascicularis (Crab-eating macaque).